The chain runs to 100 residues: Protein RnfH (100 aa).

The protein belongs to the UPF0125 (RnfH) family.

In Actinobacillus succinogenes (strain ATCC 55618 / DSM 22257 / CCUG 43843 / 130Z), this protein is Protein RnfH.